An 86-amino-acid chain; its full sequence is Translation initiation factor IF-1 (86 aa).

The region spanning 1 to 72 (MPKDDVIKME…TKGRIVYRKK (72 aa)) is the S1-like domain.

Belongs to the IF-1 family. As to quaternary structure, component of the 30S ribosomal translation pre-initiation complex which assembles on the 30S ribosome in the order IF-2 and IF-3, IF-1 and N-formylmethionyl-tRNA(fMet); mRNA recruitment can occur at any time during PIC assembly.

The protein localises to the cytoplasm. One of the essential components for the initiation of protein synthesis. Stabilizes the binding of IF-2 and IF-3 on the 30S subunit to which N-formylmethionyl-tRNA(fMet) subsequently binds. Helps modulate mRNA selection, yielding the 30S pre-initiation complex (PIC). Upon addition of the 50S ribosomal subunit IF-1, IF-2 and IF-3 are released leaving the mature 70S translation initiation complex. The chain is Translation initiation factor IF-1 from Pseudothermotoga lettingae (strain ATCC BAA-301 / DSM 14385 / NBRC 107922 / TMO) (Thermotoga lettingae).